A 311-amino-acid chain; its full sequence is MQRFIKWLAVITSLDLLIVLLGGALVTKTGSGQGCGKSWPLCNGEFVPSNLSMETIIELSHRLTSGSAGILVTLLCILSWKYYKHVRETKTLAILSFVFLVAQALMGAAAVVWGQMPAVLAIHFGISLISFASVILLTCLIFEIDQKFDARSLIMDKKMKFHIYGVTIYSYIVVYTGALVRHERASLACPDFPLCSKNRPMPTQLHEWVQMGHRVAAMLIFAWILYAMILAIRHYKQQPVVYWGWIISFILVTLQAVVGVLVVFTNASLAMALLHSLFISCLFAVLCYLVMLGTRIKVNAKEAGSTSKQTK.

Residues 1 to 6 are Cytoplasmic-facing; the sequence is MQRFIK. A helical membrane pass occupies residues 7–27; the sequence is WLAVITSLDLLIVLLGGALVT. Topologically, residues 28–62 are extracellular; sequence KTGSGQGCGKSWPLCNGEFVPSNLSMETIIELSHR. Cys35 and Cys42 are oxidised to a cystine. Glu58 is an active-site residue. His61 contributes to the heme o binding site. A helical membrane pass occupies residues 63 to 83; sequence LTSGSAGILVTLLCILSWKYY. At 84-91 the chain is on the cytoplasmic side; it reads KHVRETKT. The chain crosses the membrane as a helical span at residues 92-112; it reads LAILSFVFLVAQALMGAAAVV. The Extracellular portion of the chain corresponds to 113-121; the sequence is WGQMPAVLA. The helical transmembrane segment at 122 to 142 threads the bilayer; it reads IHFGISLISFASVILLTCLIF. Heme o is bound at residue His123. Residues 143 to 159 are Cytoplasmic-facing; it reads EIDQKFDARSLIMDKKM. A helical membrane pass occupies residues 160-180; sequence KFHIYGVTIYSYIVVYTGALV. Over 181–211 the chain is Extracellular; it reads RHERASLACPDFPLCSKNRPMPTQLHEWVQM. Cys189 and Cys195 are disulfide-bonded. A helical membrane pass occupies residues 212–232; sequence GHRVAAMLIFAWILYAMILAI. Residue His213 coordinates heme b. The Cytoplasmic portion of the chain corresponds to 233 to 243; the sequence is RHYKQQPVVYW. The helical transmembrane segment at 244 to 264 threads the bilayer; sequence GWIISFILVTLQAVVGVLVVF. The Extracellular portion of the chain corresponds to 265 to 271; it reads TNASLAM. A helical transmembrane segment spans residues 272-292; sequence ALLHSLFISCLFAVLCYLVML. Heme b is bound at residue His275. Residues 293–311 are Cytoplasmic-facing; the sequence is GTRIKVNAKEAGSTSKQTK.

This sequence belongs to the COX15/CtaA family. Type 1 subfamily. As to quaternary structure, interacts with CtaB. The cofactor is heme b.

It localises to the cell membrane. It carries out the reaction Fe(II)-heme o + 2 A + H2O = Fe(II)-heme a + 2 AH2. It participates in porphyrin-containing compound metabolism; heme A biosynthesis; heme A from heme O: step 1/1. Its function is as follows. Catalyzes the conversion of heme O to heme A by two successive hydroxylations of the methyl group at C8. The first hydroxylation forms heme I, the second hydroxylation results in an unstable dihydroxymethyl group, which spontaneously dehydrates, resulting in the formyl group of heme A. The protein is Heme A synthase of Bacillus cereus (strain G9842).